A 299-amino-acid polypeptide reads, in one-letter code: Biotin transporter (299 aa).

10 consecutive transmembrane segments (helical) span residues 2 to 22 (ALLI…GEYL), 26 to 46 (VDSY…FLPF), 56 to 76 (TVGL…MLSF), 81 to 101 (YLTV…ITLI), 110 to 130 (LRWG…IIRY), 137 to 157 (FWTG…GMVG), 172 to 192 (AFAW…FLLG), 202 to 222 (LQWG…YFMW), 233 to 253 (TLGI…LAIW), and 256 to 276 (QPHW…LWVH). EamA domains lie at 3–128 (LLII…AGII) and 139–274 (TGLL…ASLW).

It belongs to the drug/metabolite transporter (DMT) superfamily. 10 TMS drug/metabolite exporter (DME) (TC 2.A.7.3) family.

It localises to the cell inner membrane. The catalysed reaction is biotin(in) = biotin(out). Its function is as follows. Uptake of biotin. This is Biotin transporter from Escherichia coli O157:H7.